The chain runs to 433 residues: Casein kinase 1-like protein 5 (433 aa).

Residues 9–278 enclose the Protein kinase domain; the sequence is FRLGRKIGSG…LKRLFRNLFI (270 aa). ATP-binding positions include 15–23 and Lys-38; that span reads IGSGSFGEI. Asp-128 (proton acceptor) is an active-site residue. Residues 297–433 are disordered; that stretch reads QSQSGNPQPR…DDVEPQSKAL (137 aa). Over residues 342–359 the composition is skewed to basic and acidic residues; it reads LKQKDKNGNDSAIAKDKL. Low complexity predominate over residues 362 to 375; it reads GSLNLGRSEGSSSR. Ser-390 carries the post-translational modification Phosphoserine. Positions 407–423 are enriched in polar residues; it reads INNNAGDETAATPQSNG.

Belongs to the protein kinase superfamily. CK1 Ser/Thr protein kinase family. Casein kinase I subfamily. As to quaternary structure, monomer. Post-translationally, autophosphorylated.

The protein localises to the cytoplasm. The enzyme catalyses L-seryl-[protein] + ATP = O-phospho-L-seryl-[protein] + ADP + H(+). It carries out the reaction L-threonyl-[protein] + ATP = O-phospho-L-threonyl-[protein] + ADP + H(+). In terms of biological role, casein kinases are operationally defined by their preferential utilization of acidic proteins such as caseins as substrates. It can phosphorylate a large number of proteins. The protein is Casein kinase 1-like protein 5 of Arabidopsis thaliana (Mouse-ear cress).